Reading from the N-terminus, the 196-residue chain is Agamous-like MADS-box protein AGL27 (196 aa).

The region spanning 1 to 61 (MGRRKIEIKR…GKLYDSSSGD (61 aa)) is the MADS-box domain. The region spanning 80–170 (ALDLEEKIQN…ASQMGKNTLL (91 aa)) is the K-box domain. The tract at residues 175 to 196 (ERGMFPGSSSGNKIPETLPLLN) is disordered.

In terms of assembly, interacts with AGL39, AGL97 and AGL74. As to expression, expressed in most plant tissues, embryo, seedlings, roots, leaves, stems, inflorescence, pollen, siliques and flowers.

Its subcellular location is the nucleus. Functionally, probable transcription factor involved in the negative regulation of flowering time in both long and short days, probably through the photoperiodic and vernalization pathways. Prevents premature flowering. The protein is Agamous-like MADS-box protein AGL27 (AGL27) of Arabidopsis thaliana (Mouse-ear cress).